We begin with the raw amino-acid sequence, 403 residues long: Acetylornithine/succinyldiaminopimelate aminotransferase (403 aa).

Residues 107–108 (GA) and F140 contribute to the pyridoxal 5'-phosphate site. R143 lines the N(2)-acetyl-L-ornithine pocket. Residue 225–228 (DEVQ) participates in pyridoxal 5'-phosphate binding. K254 carries the N6-(pyridoxal phosphate)lysine modification. Residue T282 coordinates N(2)-acetyl-L-ornithine. Residue T283 participates in pyridoxal 5'-phosphate binding.

It belongs to the class-III pyridoxal-phosphate-dependent aminotransferase family. ArgD subfamily. In terms of assembly, homodimer. It depends on pyridoxal 5'-phosphate as a cofactor.

The protein localises to the cytoplasm. It carries out the reaction N(2)-acetyl-L-ornithine + 2-oxoglutarate = N-acetyl-L-glutamate 5-semialdehyde + L-glutamate. The enzyme catalyses N-succinyl-(2S,6S)-2,6-diaminopimelate + 2-oxoglutarate = (S)-2-succinylamino-6-oxoheptanedioate + L-glutamate. It participates in amino-acid biosynthesis; L-arginine biosynthesis; N(2)-acetyl-L-ornithine from L-glutamate: step 4/4. It functions in the pathway amino-acid biosynthesis; L-lysine biosynthesis via DAP pathway; LL-2,6-diaminopimelate from (S)-tetrahydrodipicolinate (succinylase route): step 2/3. Its function is as follows. Involved in both the arginine and lysine biosynthetic pathways. The polypeptide is Acetylornithine/succinyldiaminopimelate aminotransferase (Photorhabdus laumondii subsp. laumondii (strain DSM 15139 / CIP 105565 / TT01) (Photorhabdus luminescens subsp. laumondii)).